The following is a 122-amino-acid chain: Large ribosomal subunit protein bL12 (122 aa).

Belongs to the bacterial ribosomal protein bL12 family. As to quaternary structure, homodimer. Part of the ribosomal stalk of the 50S ribosomal subunit. Forms a multimeric L10(L12)X complex, where L10 forms an elongated spine to which 2 to 4 L12 dimers bind in a sequential fashion. Binds GTP-bound translation factors.

Forms part of the ribosomal stalk which helps the ribosome interact with GTP-bound translation factors. Is thus essential for accurate translation. This chain is Large ribosomal subunit protein bL12, found in Vibrio parahaemolyticus serotype O3:K6 (strain RIMD 2210633).